A 291-amino-acid polypeptide reads, in one-letter code: Phosphatidylserine decarboxylase proenzyme (291 aa).

Residues Asp-93, His-150, and Ser-253 each act as charge relay system; for autoendoproteolytic cleavage activity in the active site. The active-site Schiff-base intermediate with substrate; via pyruvic acid; for decarboxylase activity is Ser-253. The residue at position 253 (Ser-253) is a Pyruvic acid (Ser); by autocatalysis.

Belongs to the phosphatidylserine decarboxylase family. PSD-B subfamily. Prokaryotic type I sub-subfamily. In terms of assembly, heterodimer of a large membrane-associated beta subunit and a small pyruvoyl-containing alpha subunit. Pyruvate serves as cofactor. Post-translationally, is synthesized initially as an inactive proenzyme. Formation of the active enzyme involves a self-maturation process in which the active site pyruvoyl group is generated from an internal serine residue via an autocatalytic post-translational modification. Two non-identical subunits are generated from the proenzyme in this reaction, and the pyruvate is formed at the N-terminus of the alpha chain, which is derived from the carboxyl end of the proenzyme. The autoendoproteolytic cleavage occurs by a canonical serine protease mechanism, in which the side chain hydroxyl group of the serine supplies its oxygen atom to form the C-terminus of the beta chain, while the remainder of the serine residue undergoes an oxidative deamination to produce ammonia and the pyruvoyl prosthetic group on the alpha chain. During this reaction, the Ser that is part of the protease active site of the proenzyme becomes the pyruvoyl prosthetic group, which constitutes an essential element of the active site of the mature decarboxylase.

It localises to the cell membrane. It catalyses the reaction a 1,2-diacyl-sn-glycero-3-phospho-L-serine + H(+) = a 1,2-diacyl-sn-glycero-3-phosphoethanolamine + CO2. The protein operates within phospholipid metabolism; phosphatidylethanolamine biosynthesis; phosphatidylethanolamine from CDP-diacylglycerol: step 2/2. Functionally, catalyzes the formation of phosphatidylethanolamine (PtdEtn) from phosphatidylserine (PtdSer). The sequence is that of Phosphatidylserine decarboxylase proenzyme from Alcanivorax borkumensis (strain ATCC 700651 / DSM 11573 / NCIMB 13689 / SK2).